Reading from the N-terminus, the 274-residue chain is 2,3,4,5-tetrahydropyridine-2,6-dicarboxylate N-succinyltransferase (274 aa).

The substrate site is built by Arg104 and Asp141.

Belongs to the transferase hexapeptide repeat family. As to quaternary structure, homotrimer.

The protein localises to the cytoplasm. It carries out the reaction (S)-2,3,4,5-tetrahydrodipicolinate + succinyl-CoA + H2O = (S)-2-succinylamino-6-oxoheptanedioate + CoA. It participates in amino-acid biosynthesis; L-lysine biosynthesis via DAP pathway; LL-2,6-diaminopimelate from (S)-tetrahydrodipicolinate (succinylase route): step 1/3. The chain is 2,3,4,5-tetrahydropyridine-2,6-dicarboxylate N-succinyltransferase from Salmonella arizonae (strain ATCC BAA-731 / CDC346-86 / RSK2980).